Consider the following 657-residue polypeptide: Transmembrane protein 232 (657 aa).

A run of 2 helical transmembrane segments spans residues 168–188 and 353–373; these read IGYLVFLRLFIFFLHGHLESF and WAWNVVYIYTVILAEICLYAA.

It is found in the membrane. Functionally, plays a critical role for male fertility and sperm motility by regulating sperm cytoplasm removal and maintaining axoneme integrity. The polypeptide is Transmembrane protein 232 (TMEM232) (Homo sapiens (Human)).